Consider the following 63-residue polypeptide: Ct-IT2 (63 aa).

One can recognise an LCN-type CS-alpha/beta domain in the interval K1–G63. Intrachain disulfides connect C11–C62, C15–C36, C22–C43, and C26–C45. G63 is modified (glycine amide).

As to expression, expressed by the venom gland.

Its subcellular location is the secreted. In terms of biological role, beta toxins bind voltage-independently at site-4 of sodium channels (Nav) and shift the voltage of activation toward more negative potentials thereby affecting sodium channel activation and promoting spontaneous and repetitive firing. Is highly active on insects, since it provokes paralysis and death when injected into crickets. This Centruroides tecomanus (Scorpion) protein is Ct-IT2.